A 249-amino-acid polypeptide reads, in one-letter code: Phosphate import ATP-binding protein PstB (249 aa).

Residues 5–244 (LRIEDLHFWY…PEKDRTEAYV (240 aa)) form the ABC transporter domain. 37-44 (GPSGCGKS) is an ATP binding site.

The protein belongs to the ABC transporter superfamily. Phosphate importer (TC 3.A.1.7) family. The complex is composed of two ATP-binding proteins (PstB), two transmembrane proteins (PstC and PstA) and a solute-binding protein (PstS).

It is found in the cell inner membrane. It carries out the reaction phosphate(out) + ATP + H2O = ADP + 2 phosphate(in) + H(+). Part of the ABC transporter complex PstSACB involved in phosphate import. Responsible for energy coupling to the transport system. The chain is Phosphate import ATP-binding protein PstB from Salinibacter ruber (strain DSM 13855 / M31).